We begin with the raw amino-acid sequence, 261 residues long: (R)-S-adenosyl-L-methionine hydrolase (261 aa).

Adenosine-binding residues include D12, D72, and N187. (R)-S-adenosyl-L-methionine is bound by residues N187, S231, and V239. Residue V239 participates in adenosine binding.

It belongs to the SAM hydrolase / SAM-dependent halogenase family.

It carries out the reaction (R)-S-adenosyl-L-methionine + H2O = adenosine + L-methionine + H(+). Activity is inhibited by chloride. Functionally, catalyzes the hydrolysis of S-adenosyl-L-methionine (SAM) into adenosine and L-methionine. Is likely stereoselective, specifically hydrolyzing (R)-S-adenosyl-L-methionine ((R)-SAM), the inactive form of the ubiquitous cofactor SAM, and not the active form of SAM, (S)-S-adenosyl-L-methionine. Probaly plays a role in preventing accumulation of (R)-S-adenosyl-L-methionine in cells; maintenance of (S)-S-denosyl-L-methionine homochirality is important for cellular health given that the (R)-form is largely inactive as a methyl donor and can function as an inhibitor of methyltransferases. Shows very slow iodinase activity in vitro. This chain is (R)-S-adenosyl-L-methionine hydrolase, found in Salinispora arenicola (strain CNS-205).